The primary structure comprises 205 residues: Mitotic spindle assembly checkpoint protein MAD2A (205 aa).

An N-acetylalanine modification is found at Ala-2. The region spanning 14 to 197 (RGSAEIVAEF…TTIHKVNSMV (184 aa)) is the HORMA domain. Ser-130, Ser-170, Ser-185, and Ser-195 each carry phosphoserine. The interval 195–205 (SMVAYKTPVND) is required for assuming the closed conformation and for interaction with CDC20.

Belongs to the MAD2 family. As to quaternary structure, monomer and homodimer. Heterodimerizes with MAD2L1 in order to form a tetrameric MAD1L1-MAD2L1 core complex. In the closed and open conformation, interacts with MAD1L1. Formation of a heterotetrameric core complex containing two molecules each of MAD1L1 and of MAD2L1 promotes binding of another molecule of MAD2L1 to each MAD2L1, resulting in a heterohexamer. Interacts with MAD2L1BP. Interacts with ADAM17/TACE. Interacts with CDC20. Dimeric MAD2L1 in the closed conformation interacts with CDC20. Monomeric MAD2L1 in the open conformation does not interact with CDC20. CDC20 competes with MAD1L1 for MAD2L1 binding. In the closed conformation, interacts with BUB1B. Interacts with TTK. Interacts with TPR. Binds to UBD (via ubiquitin-like 1 domain) during mitosis. Interacts with isoform 1 and isoform 2 of NEK2. Interacts with HSF1; this interaction occurs in mitosis. In terms of processing, phosphorylated on multiple serine residues. The level of phosphorylation varies during the cell cycle and is highest during mitosis. Phosphorylation abolishes interaction with MAD1L1 and reduces interaction with CDC20. Phosphorylated by NEK2.

The protein resides in the nucleus. Its subcellular location is the chromosome. It is found in the centromere. It localises to the kinetochore. The protein localises to the cytoplasm. The protein resides in the cytoskeleton. Its subcellular location is the spindle pole. Its function is as follows. Component of the spindle-assembly checkpoint that prevents the onset of anaphase until all chromosomes are properly aligned at the metaphase plate. In the closed conformation (C-MAD2) forms a heterotetrameric complex with MAD1L1 at unattached kinetochores during prometaphase, and recruits an open conformation of MAD2L1 (O-MAD2) which then promotes the conversion of O-MAD2 to C-MAD2. Required for the execution of the mitotic checkpoint which monitors the process of kinetochore-spindle attachment and inhibits the activity of the anaphase promoting complex by sequestering CDC20 until all chromosomes are aligned at the metaphase plate. This is Mitotic spindle assembly checkpoint protein MAD2A (Mad2l1) from Mus musculus (Mouse).